We begin with the raw amino-acid sequence, 323 residues long: Fructose-1,6-bisphosphatase class 1 (323 aa).

Mg(2+) is bound by residues E90, D111, L113, and D114. Substrate contacts are provided by residues 114–117 (DGSS), Y222, and K253. Position 259 (E259) interacts with Mg(2+).

The protein belongs to the FBPase class 1 family. In terms of assembly, homotetramer. The cofactor is Mg(2+).

The protein localises to the cytoplasm. The catalysed reaction is beta-D-fructose 1,6-bisphosphate + H2O = beta-D-fructose 6-phosphate + phosphate. The protein operates within carbohydrate biosynthesis; gluconeogenesis. In Pelobacter propionicus (strain DSM 2379 / NBRC 103807 / OttBd1), this protein is Fructose-1,6-bisphosphatase class 1.